A 163-amino-acid polypeptide reads, in one-letter code: tRNA-acetylating toxin 2 (163 aa).

Residue Tyr137 is part of the active site.

The protein belongs to the acetyltransferase family. GNAT subfamily. As to quaternary structure, homodimer. Forms a complex with cognate antitoxin TacA2.

The catalysed reaction is glycyl-tRNA(Gly) + acetyl-CoA = N-acetylglycyl-tRNA(Gly) + CoA + H(+). It carries out the reaction L-isoleucyl-tRNA(Ile) + acetyl-CoA = N-acetyl-L-isoleucyl-tRNA(Ile) + CoA + H(+). It catalyses the reaction L-leucyl-tRNA(Leu) + acetyl-CoA = N-acetyl-L-leucyl-tRNA(Leu) + CoA + H(+). Its function is as follows. Toxic component of a type II toxin-antitoxin (TA) system. Acetylates tRNA and inhibits translation. Acetylates mainly Gly and Ile/Leu in vitro. Overexpression during the lag phase of a tacA2-tacT2 deletion strain leads to a 100-fold increase in persister cells in the presence of cefotaxime and a non-growth state in the absence of antibiotic. This protein, which has a single amino acid compared to S.typhimurium strain 14028s (Lys-29 is Glu in 14028s), produces 100-fold more persister cells, has much higher acetylation activity and binds tRNA much better. Persister cell formation and the growth defect are neutralized by cognate antitoxin TacA2. The TacA2-TacT2 complex both represses and derepresses expression of its own operon. This is tRNA-acetylating toxin 2 from Salmonella enteritidis.